Consider the following 356-residue polypeptide: Heparan sulfate 2-O-sulfotransferase 1 (356 aa).

Residues 1–11 are Cytoplasmic-facing; it reads MGLLRIMLPPK. A helical; Signal-anchor for type II membrane protein transmembrane segment spans residues 12–28; the sequence is LQLLAVLVFGVAVLFLE. The stretch at 24–51 forms a coiled coil; it reads VLFLENQIQKLEESRGKLERAIARHEVR. Residues 29-356 are Lumenal-facing; that stretch reads NQIQKLEESR…FYEKIYPKSN (328 aa). Residues K83, T84, A85, S86, T87, and S88 each contribute to the adenosine 3',5'-bisphosphate site. N-linked (GlcNAc...) asparagine glycosylation is found at N108 and N127. Catalysis depends on residues H140 and H142. Residues R164 and S172 each coordinate adenosine 3',5'-bisphosphate. Disulfide bonds link C201–C209 and C222–C228. Residues Y279, S285, T290, and K293 each contribute to the adenosine 3',5'-bisphosphate site.

This sequence belongs to the sulfotransferase 3 family. In terms of assembly, homotrimer. As to expression, expressed in heart, limb, head and trunk. At stages 20 and 24, it is expressed in the most regions of the first and second pharyngeal arche. In both wing and leg buds, it is detected at the overlying ectoderm and mesenchyme throughout stages 21, 23 and 24.

It localises to the golgi apparatus membrane. In terms of biological role, catalyzes the transfer of a sulfo group from 3'-phospho-5'-adenylyl sulfate (PAPS) to the 2-OH position of iduronic acid (IdoA) or glucuronic acid (GlcA) within the heparan sulfate (HS) chain and participates in HS biosynthesis. This chain is Heparan sulfate 2-O-sulfotransferase 1, found in Gallus gallus (Chicken).